A 430-amino-acid chain; its full sequence is UDP-glucose 6-dehydrogenase AglM (430 aa).

Residue Cys-269 is part of the active site.

Belongs to the UDP-glucose/GDP-mannose dehydrogenase family.

It catalyses the reaction UDP-alpha-D-glucose + 2 NAD(+) + H2O = UDP-alpha-D-glucuronate + 2 NADH + 3 H(+). It participates in nucleotide-sugar biosynthesis; UDP-alpha-D-glucuronate biosynthesis; UDP-alpha-D-glucuronate from UDP-alpha-D-glucose: step 1/1. Its pathway is cell surface structure biogenesis; S-layer biogenesis. With respect to regulation, activity improves as salinity decreases. Involved in the assembly of a N-linked pentasaccharide that decorates the S-layer glycoprotein and flagellins. Involved in the biosynthesis of the hexuronic acids found at both positions 2 and 3 of the pentasaccharide. The polypeptide is UDP-glucose 6-dehydrogenase AglM (aglM) (Haloferax volcanii (strain ATCC 29605 / DSM 3757 / JCM 8879 / NBRC 14742 / NCIMB 2012 / VKM B-1768 / DS2) (Halobacterium volcanii)).